Reading from the N-terminus, the 446-residue chain is Phosphoglucosamine mutase (446 aa).

Ser-101 functions as the Phosphoserine intermediate in the catalytic mechanism. 4 residues coordinate Mg(2+): Ser-101, Asp-240, Asp-242, and Asp-244. Phosphoserine is present on Ser-101.

The protein belongs to the phosphohexose mutase family. The cofactor is Mg(2+). Post-translationally, activated by phosphorylation.

It carries out the reaction alpha-D-glucosamine 1-phosphate = D-glucosamine 6-phosphate. Catalyzes the conversion of glucosamine-6-phosphate to glucosamine-1-phosphate. This chain is Phosphoglucosamine mutase, found in Pseudomonas putida (strain ATCC 700007 / DSM 6899 / JCM 31910 / BCRC 17059 / LMG 24140 / F1).